The following is a 33-amino-acid chain: Photosystem II reaction center protein Psb30 (33 aa).

The helical transmembrane segment at V5–L25 threads the bilayer.

The protein belongs to the Psb30/Ycf12 family. As to quaternary structure, PSII is composed of 1 copy each of membrane proteins PsbA, PsbB, PsbC, PsbD, PsbE, PsbF, PsbH, PsbI, PsbJ, PsbK, PsbL, PsbM, PsbT, PsbX, PsbY, PsbZ, Psb30/Ycf12, peripheral proteins of the oxygen-evolving complex and a large number of cofactors. It forms dimeric complexes.

Its subcellular location is the plastid. The protein resides in the chloroplast thylakoid membrane. A core subunit of photosystem II (PSII), probably helps stabilize the reaction center. This chain is Photosystem II reaction center protein Psb30, found in Huperzia lucidula (Shining clubmoss).